The chain runs to 430 residues: Serine--tRNA ligase (430 aa).

Residue 236 to 238 (TAE) participates in L-serine binding. Residue 267-269 (RSE) coordinates ATP. E290 is an L-serine binding site. 354 to 357 (EISS) contributes to the ATP binding site. S390 contributes to the L-serine binding site.

It belongs to the class-II aminoacyl-tRNA synthetase family. Type-1 seryl-tRNA synthetase subfamily. In terms of assembly, homodimer. The tRNA molecule binds across the dimer.

The protein localises to the cytoplasm. The catalysed reaction is tRNA(Ser) + L-serine + ATP = L-seryl-tRNA(Ser) + AMP + diphosphate + H(+). The enzyme catalyses tRNA(Sec) + L-serine + ATP = L-seryl-tRNA(Sec) + AMP + diphosphate + H(+). It participates in aminoacyl-tRNA biosynthesis; selenocysteinyl-tRNA(Sec) biosynthesis; L-seryl-tRNA(Sec) from L-serine and tRNA(Sec): step 1/1. In terms of biological role, catalyzes the attachment of serine to tRNA(Ser). Is also able to aminoacylate tRNA(Sec) with serine, to form the misacylated tRNA L-seryl-tRNA(Sec), which will be further converted into selenocysteinyl-tRNA(Sec). The chain is Serine--tRNA ligase from Mannheimia succiniciproducens (strain KCTC 0769BP / MBEL55E).